A 153-amino-acid chain; its full sequence is NAD(P)H-quinone oxidoreductase subunit N (153 aa).

The protein belongs to the complex I NdhN subunit family. In terms of assembly, NDH-1 can be composed of about 15 different subunits; different subcomplexes with different compositions have been identified which probably have different functions.

It localises to the cellular thylakoid membrane. It catalyses the reaction a plastoquinone + NADH + (n+1) H(+)(in) = a plastoquinol + NAD(+) + n H(+)(out). The enzyme catalyses a plastoquinone + NADPH + (n+1) H(+)(in) = a plastoquinol + NADP(+) + n H(+)(out). Functionally, NDH-1 shuttles electrons from an unknown electron donor, via FMN and iron-sulfur (Fe-S) centers, to quinones in the respiratory and/or the photosynthetic chain. The immediate electron acceptor for the enzyme in this species is believed to be plastoquinone. Couples the redox reaction to proton translocation, and thus conserves the redox energy in a proton gradient. Cyanobacterial NDH-1 also plays a role in inorganic carbon-concentration. The polypeptide is NAD(P)H-quinone oxidoreductase subunit N (Prochlorococcus marinus (strain MIT 9313)).